We begin with the raw amino-acid sequence, 331 residues long: MKKKRPVLQDVADRVGVTKMTVSRFLRNPEQVSVALRGKIAAALDELGYIPNRAPDILSNATSRAIGVLLPSLTNQVFAEVLRGIESVTDAHGYQTMLAHYGYKPEMEQERLESMLSWNIDGLILTERTHTPRTLKMIEVAGIPVVELMDSKSPCLDIAVGFDNFEAARQMTTAIIARGHRHIAYLGARLDERTIIKQKGYEQAMLDAGLVPYSVMVEQSSSYSSGIELIRQARREYPQLDGVFCTNDDLAVGAAFECQRLGLKVPDDMAIAGFHGHDIGQVMEPRLASVLTPRERMGSIGAERLLARIRGESVTPKMLDLGFTLSPGGSI.

An HTH lacI-type domain is found at 6–60 (PVLQDVADRVGVTKMTVSRFLRNPEQVSVALRGKIAAALDELGYIPNRAPDILSN). Positions 8–27 (LQDVADRVGVTKMTVSRFLR) form a DNA-binding region, H-T-H motif.

It participates in carbohydrate acid metabolism; D-gluconate degradation [regulation]. Functionally, negative regulator for the gluconate utilization system GNT-I, the gntUKR operon. The protein is HTH-type transcriptional regulator GntR (gntR) of Escherichia coli O6:H1 (strain CFT073 / ATCC 700928 / UPEC).